The chain runs to 1441 residues: Probable cleavage and polyadenylation specificity factor subunit 1 (1441 aa).

It belongs to the CPSF1 family. In terms of assembly, CPSF is a heterotetramer composed of four distinct subunits 160, 100, 70 and 30 kDa.

It localises to the nucleus. Functionally, CPSF plays a key role in pre-mRNA 3'-end formation, recognizing the AAUAAA signal sequence and interacting with poly(A)polymerase and other factors to bring about cleavage and poly(A) addition. This subunit is involved in the RNA recognition step of the polyadenylation reaction. The protein is Probable cleavage and polyadenylation specificity factor subunit 1 of Oryza sativa subsp. japonica (Rice).